Consider the following 421-residue polypeptide: MRALPTLDSLARMRPPLGDPRAAEDTLTPRPANKSAVERLAADRAKYVRSTLGSSRGPVSEHRVPEAPGVQHRNPIPSALAPAPVARRAIARKPLRPDSLVIYRQKCEFVRGSDADCSRVGLMKKFFQGSGKDKMAVAPETTRVADEDKTTKETEATWTKSSQAAAARPASMLPPPTPVVAVKSPAEKTRVANEDKTTKETEATWTKSSQAAAARPASMLPPPTPVVAVKSPAEKTRVANEDKTTKETEATWTKSSQAAATRPASMLPPPTPVVAVKSPALPFEVAPRVPVGCSGVQLRVSRSKGLQRSQSDLSSRYSIAKAESDTFFKYCGLDPDVVEALGRENFSAGSDCVTLKVRSVSMAASDSSFSRHSEDGLQEEELLEQVPSTTSVVERNARIIKWLFTCKKAKETPSQKLQGPA.

Disordered stretches follow at residues 1–36 (MRALPTLDSLARMRPPLGDPRAAEDTLTPRPANKSA), 51–80 (TLGSSRGPVSEHRVPEAPGVQHRNPIPSAL), and 141–266 (TTRV…PASM). Composition is skewed to basic and acidic residues over residues 143–155 (RVADEDKTTKETE), 185–202 (PAEKTRVANEDKTTKETE), and 232–249 (PAEKTRVANEDKTTKETE). Serine 350 carries the post-translational modification Phosphoserine.

It belongs to the FAM110 family. Interacts with AKT1; the interaction is transient and follows AKT1 activation. Interacts with PPP2CA and alpha-tubulin.

The protein localises to the cytoplasm. The protein resides in the cytoskeleton. It localises to the microtubule organizing center. Its subcellular location is the centrosome. It is found in the spindle pole. The protein localises to the nucleus. Its function is as follows. May play a role in microtubule organization. May play a role in cell spreading and cell migration of epithelial cells; the function may involve the AKT1 signaling pathway. The polypeptide is Protein FAM110C (Fam110c) (Mus musculus (Mouse)).